Consider the following 120-residue polypeptide: Transcription elongation factor SPT4 (120 aa).

The tract at residues methionine 1–leucine 39 is interaction with spt-5. The segment at cysteine 15–cysteine 35 adopts a C4-type zinc-finger fold.

The protein belongs to the SPT4 family. Interacts with spt-5 to form DSIF. DSIF interacts with RNA polymerase II and with the positive transcription elongation factor b complex (P-TEFb complex), which is composed of cdk-9 and cyclin-T.

Its subcellular location is the nucleus. May function as a component of the DRB sensitivity-inducing factor complex (DSIF complex), which regulates transcription elongation by RNA polymerase II. DSIF may enhance transcriptional pausing at sites proximal to the promoter, which may in turn facilitate the assembly of an elongation competent RNA polymerase II complex. The chain is Transcription elongation factor SPT4 (spt-4) from Caenorhabditis briggsae.